The primary structure comprises 593 residues: Cytochrome c oxidase polypeptide 1 (593 aa).

The next 2 membrane-spanning stretches (helical) occupy residues 5–25 and 71–91; these read ASSI…VAVL and IGIL…VSVL. Residue His117 coordinates Fe(II)-heme a. Transmembrane regions (helical) follow at residues 122–142, 154–174, 204–224, 246–266, 288–308, and 320–340; these read LFLF…PLLI, AIAF…FLIP, GLHL…ATIF, QSGL…MLLL, LFWF…MGIV, and LFGF…SFGV. Cu cation contacts are provided by His294 and Tyr298. The segment at residues 294–298 is a cross-link (1'-histidyl-3'-tyrosine (His-Tyr)); sequence HPEVY. The Cu cation site is built by His343 and His344. The next 5 membrane-spanning stretches (helical) occupy residues 358 to 378, 401 to 421, 425 to 445, 467 to 487, and 506 to 526; these read FMAV…NWIT, FIIG…LILH, YVVG…LFAA, FWTA…LGYG, and LATV…FNMA. His429 contributes to the heme a3 binding site. A Fe(II)-heme a-binding site is contributed by His431. The interval 562 to 593 is disordered; sequence TTVLPDGGDEAQSEADAVTDGGQPAADSDTES.

Belongs to the heme-copper respiratory oxidase family.

It localises to the cell membrane. The catalysed reaction is 4 Fe(II)-[cytochrome c] + O2 + 8 H(+)(in) = 4 Fe(III)-[cytochrome c] + 2 H2O + 4 H(+)(out). Its pathway is energy metabolism; oxidative phosphorylation. Its function is as follows. Cytochrome c oxidase is the component of the respiratory chain that catalyzes the reduction of oxygen to water. Subunits 1-3 form the functional core of the enzyme complex. CO I is the catalytic subunit of the enzyme. Electrons originating in cytochrome c are transferred via the copper A center of subunit 2 and heme A of subunit 1 to the bimetallic center formed by heme A3 and copper B. This chain is Cytochrome c oxidase polypeptide 1 (coxA2), found in Halobacterium salinarum (strain ATCC 700922 / JCM 11081 / NRC-1) (Halobacterium halobium).